A 141-amino-acid polypeptide reads, in one-letter code: Hemoglobin subunit alpha (141 aa).

The Globin domain maps to 1–141 (VLSGDDKSNL…VSTVLTSKYR (141 aa)). Serine 3 carries the phosphoserine modification. Lysine 7 and lysine 11 each carry N6-succinyllysine. At lysine 16 the chain carries N6-acetyllysine; alternate. An N6-succinyllysine; alternate modification is found at lysine 16. Tyrosine 24 carries the phosphotyrosine modification. Lysine 40 bears the N6-succinyllysine mark. Residue serine 49 is modified to Phosphoserine. Histidine 58 provides a ligand contact to O2. A heme b-binding site is contributed by histidine 87. Serine 102 carries the post-translational modification Phosphoserine. Residue threonine 108 is modified to Phosphothreonine. 2 positions are modified to phosphoserine: serine 124 and serine 131. 2 positions are modified to phosphothreonine: threonine 134 and threonine 137. Serine 138 carries the post-translational modification Phosphoserine.

Belongs to the globin family. In terms of assembly, heterotetramer of two alpha chains and two beta chains. In terms of tissue distribution, red blood cells.

Functionally, involved in oxygen transport from the lung to the various peripheral tissues. The protein is Hemoglobin subunit alpha of Microtus pennsylvanicus (Meadow vole).